The chain runs to 136 residues: Ribosome-binding factor A (136 aa).

Belongs to the RbfA family. In terms of assembly, monomer. Binds 30S ribosomal subunits, but not 50S ribosomal subunits or 70S ribosomes.

The protein resides in the cytoplasm. One of several proteins that assist in the late maturation steps of the functional core of the 30S ribosomal subunit. Associates with free 30S ribosomal subunits (but not with 30S subunits that are part of 70S ribosomes or polysomes). Required for efficient processing of 16S rRNA. May interact with the 5'-terminal helix region of 16S rRNA. The sequence is that of Ribosome-binding factor A from Rhodopseudomonas palustris (strain BisB5).